A 367-amino-acid chain; its full sequence is Alginate lyase (367 aa).

The signal sequence occupies residues 1-27 (MKTSHLIRIALPGALAAALLASQVSQA). Residues 65 to 66 (SK), 138 to 139 (HT), and tyrosine 256 each bind substrate.

It belongs to the polysaccharide lyase 5 family.

Its subcellular location is the periplasm. It catalyses the reaction Eliminative cleavage of alginate to give oligosaccharides with 4-deoxy-alpha-L-erythro-hex-4-enuronosyl groups at their non-reducing ends and beta-D-mannuronate at their reducing end.. Functionally, catalyzes the depolymerization of alginate by cleaving the beta-1,4 glycosidic bond between two adjacent sugar residues via a beta-elimination mechanism. May serve to degrade mislocalized alginate that is trapped in the periplasmic space. In Pseudomonas aeruginosa (strain LESB58), this protein is Alginate lyase.